The sequence spans 430 residues: Adenylosuccinate synthetase (430 aa).

GTP-binding positions include 13 to 19 and 41 to 43; these read GDEGKGK and GHT. Residue D14 is the Proton acceptor of the active site. Mg(2+) is bound by residues D14 and G41. IMP-binding positions include 14-17, 39-42, T130, R144, Q225, T240, and R304; these read DEGK and NAGH. H42 serves as the catalytic Proton donor. 300 to 306 is a substrate binding site; sequence ASTGRPR. Residues R306, 332 to 334, and 414 to 416 contribute to the GTP site; these read KLD and STG.

It belongs to the adenylosuccinate synthetase family. In terms of assembly, homodimer. Requires Mg(2+) as cofactor.

It is found in the cytoplasm. It catalyses the reaction IMP + L-aspartate + GTP = N(6)-(1,2-dicarboxyethyl)-AMP + GDP + phosphate + 2 H(+). It functions in the pathway purine metabolism; AMP biosynthesis via de novo pathway; AMP from IMP: step 1/2. Its function is as follows. Plays an important role in the de novo pathway of purine nucleotide biosynthesis. Catalyzes the first committed step in the biosynthesis of AMP from IMP. In Stenotrophomonas maltophilia (strain R551-3), this protein is Adenylosuccinate synthetase.